Here is a 62-residue protein sequence, read N- to C-terminus: UPF0434 protein NGR_c31900 (62 aa).

The protein belongs to the UPF0434 family.

This is UPF0434 protein NGR_c31900 from Sinorhizobium fredii (strain NBRC 101917 / NGR234).